The sequence spans 785 residues: Protein SEY1 (785 aa).

The Cytoplasmic portion of the chain corresponds to 1–690; sequence MTDLEVSAIQ…KRSVINSKTE (690 aa). The 227-residue stretch at 40 to 266 folds into the GB1/RHD3-type G domain; sequence GLNYHIVSVF…SEDQLFNEGY (227 aa). 50–57 contacts GTP; the sequence is GSQSTGKS. Residues 451 to 479 adopt a coiled-coil conformation; that stretch reads PKLRELEEELSNLRTELVNKEQENIKTKI. A helical membrane pass occupies residues 691-711; that stretch reads VPLYIYALLLVLGWNEFMIIL. Residues 712-714 lie on the Lumenal side of the membrane; that stretch reads RNP. The helical transmembrane segment at 715–735 threads the bilayer; that stretch reads LLITLLLIGLTGLYLGYKTKL. Topologically, residues 736–785 are cytoplasmic; that stretch reads LGPIVQVVQAMIQELQDQAKNKLRDVLVSEPEAPSQVRIGKEVDATKDED.

This sequence belongs to the TRAFAC class dynamin-like GTPase superfamily. GB1/RHD3 GTPase family. RHD3 subfamily.

It is found in the endoplasmic reticulum membrane. Cooperates with the reticulon proteins and tubule-shaping DP1 family proteins to generate and maintain the structure of the tubular endoplasmic reticulum network. Has GTPase activity, which is required for its function in ER organization. This Komagataella phaffii (strain GS115 / ATCC 20864) (Yeast) protein is Protein SEY1.